The primary structure comprises 106 residues: BLOC-1-related complex subunit 7 (106 aa).

This sequence belongs to the BORCS7 family. In terms of assembly, component of the BLOC-one-related complex (BORC) which is composed of BLOC1S1, BLOC1S2, BORCS5, BORCS6, BORCS7, BORCS8, KXD1 and SNAPIN.

It is found in the lysosome membrane. As part of the BORC complex may play a role in lysosomes movement and localization at the cell periphery. Associated with the cytosolic face of lysosomes, the BORC complex may recruit ARL8B and couple lysosomes to microtubule plus-end-directed kinesin motor. The polypeptide is BLOC-1-related complex subunit 7 (Pongo abelii (Sumatran orangutan)).